A 143-amino-acid polypeptide reads, in one-letter code: Small ribosomal subunit protein uS12 (143 aa).

The span at 1–15 (MGKCRGLRTARKLRD) shows a compositional bias: basic residues. The tract at residues 1-27 (MGKCRGLRTARKLRDHRREQKWHDKQY) is disordered. The segment covering 16–27 (HRREQKWHDKQY) has biased composition (basic and acidic residues).

The protein belongs to the universal ribosomal protein uS12 family. In terms of assembly, component of the 40S small ribosomal subunit.

The protein localises to the cytoplasm. The protein resides in the cytosol. Its subcellular location is the rough endoplasmic reticulum. This Ictalurus punctatus (Channel catfish) protein is Small ribosomal subunit protein uS12 (rps23).